We begin with the raw amino-acid sequence, 551 residues long: Terpene synthase 10 (551 aa).

The Mg(2+) site is built by D303, D307, and E455. The DDXXD motif motif lies at 303 to 307; it reads DDIYD.

It belongs to the terpene synthase family. Requires Mg(2+) as cofactor.

Its function is as follows. Catalyzes the cyclization of farnesyl diphosphate to sesquiterpene olefins. The chain is Terpene synthase 10 (TPS10) from Ricinus communis (Castor bean).